Here is a 382-residue protein sequence, read N- to C-terminus: Na(+)/H(+) antiporter NhaA 2 (382 aa).

10 helical membrane passes run 11–31 (FSVP…LDPA), 45–65 (LSFH…IAAV), 91–111 (LGGV…VGLP), 116–136 (GWGI…RMVF), 145–165 (YLLL…ALFY), 171–191 (PVVA…WGLG), 197–214 (SYWP…IGLH), 287–307 (WLVL…FGLL), 324–344 (LLVA…VSGS), and 353–373 (AAAK…MLLG).

It belongs to the NhaA Na(+)/H(+) (TC 2.A.33) antiporter family.

It localises to the cell inner membrane. The catalysed reaction is Na(+)(in) + 2 H(+)(out) = Na(+)(out) + 2 H(+)(in). In terms of biological role, na(+)/H(+) antiporter that extrudes sodium in exchange for external protons. In Pelobacter propionicus (strain DSM 2379 / NBRC 103807 / OttBd1), this protein is Na(+)/H(+) antiporter NhaA 2.